A 276-amino-acid polypeptide reads, in one-letter code: C-type lectin domain family 12 member B (276 aa).

Over 1–43 (MSEEVTYATLTFQDSAGARNNRDGNNLRKRGHPAPSPIWRHAA) the chain is Cytoplasmic. Positions 5–10 (VTYATL) match the ITIM motif motif. Tyr-7 is subject to Phosphotyrosine. A helical; Signal-anchor for type II membrane protein membrane pass occupies residues 44 to 64 (LGLVTLCLMLLIGLVTLGMMF). Topologically, residues 65-276 (LQISNDINSD…AAPVKTEDLD (212 aa)) are extracellular. Residues Asn-91, Asn-176, and Asn-237 are each glycosylated (N-linked (GlcNAc...) asparagine). The 115-residue stretch at 150–264 (YQNSCYYFTT…CSAEIFWICE (115 aa)) folds into the C-type lectin domain. Disulfide bonds link Cys-172–Cys-263 and Cys-242–Cys-255.

As to quaternary structure, homodimer. Interacts (via ITIM motif) with PTPN6. Interacts (via ITIM motif) with PTPN11; this interaction triggers dephosphorylation and activation of PTPN11. Post-translationally, N-glycosylated. In terms of tissue distribution, detected in colon, heart, kidney, liver, lung, mammary gland, ovary, spleen and testis. Expressed in melanocytes (at protein level).

Its subcellular location is the cell membrane. Functionally, inhibitory receptor postulated to negatively regulate immune and non-immune functions. Upon phosphorylation, recruits SH2 domain-containing PTPN6 and PTPN11 phosphatases to its ITIM motif and antagonizes activation signals. Although it inhibits KLRK1/NKG2D-mediated signaling, it does not bind known ligands of KLRK1/NKG2D and therefore is not its inhibitory counterpart. May limit activation of myeloid cell subsets in response to infection or tissue inflammation. May protect target cells against natural killer cell-mediated lysis. May negatively regulate cell cycle and differentiation of melanocytes via inactivation of STAT3. This chain is C-type lectin domain family 12 member B, found in Homo sapiens (Human).